The sequence spans 108 residues: Beta-defensin 126 (108 aa).

A signal peptide spans 1–20 (MKSLLFTLAVFMLLAQLVSG). The interval 21–63 (NWYVKKCLNDVGICKKKCKPGEMHIKNGWATCGKQRDCCVPAD) is in vitro binds to LPS, mediates antimicrobial activity and inhibits LPS-mediated inflammation. 3 disulfides stabilise this stretch: cysteine 27–cysteine 58, cysteine 34–cysteine 52, and cysteine 38–cysteine 59.

The protein belongs to the beta-defensin family. In terms of assembly, homodimer or homooligomer; disulfide-linked. Post-translationally, O-glycosylated; glycans contain alpha(2,3)-linked sialic acids.

The protein localises to the secreted. Its function is as follows. Highly glycosylated atypical beta-defensin involved in several aspects of sperm function. Facilitates sperm transport in the female reproductive tract and contributes to sperm protection against immunodetection; both functions are probably implicating the negative surface charge provided by its O-linked oligosaccharides in the sperm glycocalyx. Involved in binding of sperm to oviductal epithelial cells to form a sperm reservoir until ovulation. Release from the sperm surface during capacitation and ovaluation by an elevation of oviductal fluid pH is unmasking other surface components and allows sperm to penetrate the cumulus matrix and bind to the zona pellucida of the oocyte. In vitro has antimicrobial activity and may inhibit LPS-mediated inflammation. This Pan troglodytes (Chimpanzee) protein is Beta-defensin 126 (DEFB126).